The following is a 421-amino-acid chain: Forkhead box protein fkh-3 (421 aa).

The fork-head DNA-binding region spans 118-218 (RPPISYVALC…SDADFDFFRK (101 aa)).

The protein resides in the nucleus. In terms of biological role, transcription factor. Binds to DNA sequence motif 5'-CTGTTTCA-3'. Regulates expression of a class of small RNAs, known as 21U-RNAs, perhaps acting redundantly with fkh-4 and fkh-5. The chain is Forkhead box protein fkh-3 from Caenorhabditis elegans.